Consider the following 795-residue polypeptide: Phenylalanine--tRNA ligase beta subunit (795 aa).

The tRNA-binding domain occupies 39–148; the sequence is AGRFTGVVVG…AEAPIGQDIR (110 aa). A B5 domain is found at 401 to 476; sequence PQPATITLRR…RVYGYDAIPN (76 aa). Mg(2+) is bound by residues Asp454, Asp460, Glu463, and Glu464. The FDX-ACB domain maps to 701-794; the sequence is SRFPANRRDI…LKQRFQASLR (94 aa).

Belongs to the phenylalanyl-tRNA synthetase beta subunit family. Type 1 subfamily. In terms of assembly, tetramer of two alpha and two beta subunits. Requires Mg(2+) as cofactor.

The protein localises to the cytoplasm. It carries out the reaction tRNA(Phe) + L-phenylalanine + ATP = L-phenylalanyl-tRNA(Phe) + AMP + diphosphate + H(+). The chain is Phenylalanine--tRNA ligase beta subunit from Sodalis glossinidius (strain morsitans).